The following is a 314-amino-acid chain: Olfactory receptor 6C6 (314 aa).

At 1 to 24 (MKNKSMEIEFILLGLTDDPQLQIV) the chain is on the extracellular side. A glycan (N-linked (GlcNAc...) asparagine) is linked at N3. Residues 25–45 (IFLFLFLNYTLSLMGNLIIII) form a helical membrane-spanning segment. Topologically, residues 46-63 (LTLLDPRLKTPMYFFLRN) are cytoplasmic. The chain crosses the membrane as a helical span at residues 64 to 84 (FSFLEVIFTTVCIPRFLITIV). At 85-95 (TRDKTISYNNC) the chain is on the extracellular side. C95 and C177 are disulfide-bonded. The helical transmembrane segment at 96–116 (ATQLFFILLPGVTEFYLLAAM) threads the bilayer. At 117 to 141 (SYDRYVAICKPLHYPIIMSSKVCYQ) the chain is on the cytoplasmic side. Residues 142–162 (LVLSSWVTGFLIIFPPLVMGL) form a helical membrane-spanning segment. Residues 163–199 (KLDFCASKTIDHFMCETSPILQISCTDTHVLELMSFT) are Extracellular-facing. A helical transmembrane segment spans residues 200 to 220 (LAVVTLVVTLVLVILSYTCII). The Cytoplasmic portion of the chain corresponds to 221–237 (KTILKFSSAQQRNKAFS). The chain crosses the membrane as a helical span at residues 238 to 258 (TCTSHMIVVSMTYGSCIFMYI). Residues 259–269 (KPSAKERVTVS) are Extracellular-facing. A helical membrane pass occupies residues 270–290 (KGVALLYTSIAPLLNPFIYTL). At 291 to 314 (RNQQVKEVFWDVLQKNLCFSKRPF) the chain is on the cytoplasmic side.

The protein belongs to the G-protein coupled receptor 1 family.

Its subcellular location is the cell membrane. Odorant receptor. This chain is Olfactory receptor 6C6 (OR6C6), found in Homo sapiens (Human).